A 427-amino-acid chain; its full sequence is Pseudouridylate synthase 1 homolog (427 aa).

Residues 20–83 (GPRPSCSPRM…DEERREKPPK (64 aa)) are disordered. Residues 44–79 (QDRRSCSGRAGGDRVWEDGEHPAKKLKSGGDEERRE) show a composition bias toward basic and acidic residues. Residue aspartate 146 is the Nucleophile of the active site. The segment at 407–427 (GGTGAKVPSPLEGSEGDGDTD) is disordered. A phosphoserine mark is found at serine 415 and serine 420. The residue at position 426 (threonine 426) is a Phosphothreonine.

Belongs to the tRNA pseudouridine synthase TruA family. In terms of assembly, monomer. Forms a complex with RARG and the SRA1 RNA in the nucleus. As to expression, widely expressed. High levels of expression found in brain and skeletal muscle.

It is found in the mitochondrion. It localises to the nucleus. Its subcellular location is the cytoplasm. It carries out the reaction a uridine in tRNA = a pseudouridine in tRNA. The enzyme catalyses uridine(38/39/40) in tRNA = pseudouridine(38/39/40) in tRNA. It catalyses the reaction a uridine in mRNA = a pseudouridine in mRNA. Pseudouridylate synthase that catalyzes pseudouridylation of tRNAs and mRNAs. Acts on positions 27/28 in the anticodon stem and also positions 34 and 36 in the anticodon of an intron containing tRNA. Also catalyzes pseudouridylation of mRNAs: mediates pseudouridylation of mRNAs with the consensus sequence 5'-UGUAG-3'. Acts as a regulator of pre-mRNA splicing by mediating pseudouridylation of pre-mRNAs at locations associated with alternatively spliced regions. Pseudouridylation of pre-mRNAs near splice sites directly regulates mRNA splicing and mRNA 3'-end processing. Involved in regulation of nuclear receptor activity through pseudouridylation of SRA1 mRNA. The polypeptide is Pseudouridylate synthase 1 homolog (Homo sapiens (Human)).